Reading from the N-terminus, the 308-residue chain is Oxygen-dependent coproporphyrinogen-III oxidase (308 aa).

Ser100 contributes to the substrate binding site. A divalent metal cation is bound by residues His104 and His114. The active-site Proton donor is the His114. A substrate-binding site is contributed by 116-118 (NFR). Positions 153 and 183 each coordinate a divalent metal cation. Positions 248–283 (YVEFNLVFDRGTIFGLQSGGRTESILSSMPPMATWK) are important for dimerization. 266–268 (GGR) serves as a coordination point for substrate.

It belongs to the aerobic coproporphyrinogen-III oxidase family. In terms of assembly, homodimer. Requires a divalent metal cation as cofactor.

The protein resides in the cytoplasm. It carries out the reaction coproporphyrinogen III + O2 + 2 H(+) = protoporphyrinogen IX + 2 CO2 + 2 H2O. It participates in porphyrin-containing compound metabolism; protoporphyrin-IX biosynthesis; protoporphyrinogen-IX from coproporphyrinogen-III (O2 route): step 1/1. Functionally, involved in the heme biosynthesis. Catalyzes the aerobic oxidative decarboxylation of propionate groups of rings A and B of coproporphyrinogen-III to yield the vinyl groups in protoporphyrinogen-IX. The protein is Oxygen-dependent coproporphyrinogen-III oxidase of Francisella tularensis subsp. holarctica (strain LVS).